We begin with the raw amino-acid sequence, 210 residues long: Imidazole glycerol phosphate synthase subunit HisH (210 aa).

The Glutamine amidotransferase type-1 domain maps to 3–210; sequence KVALLDYGSG…QLLRNWIDLL (208 aa). Residue Cys-81 is the Nucleophile of the active site. Active-site residues include His-191 and Glu-193.

Heterodimer of HisH and HisF.

The protein localises to the cytoplasm. The enzyme catalyses 5-[(5-phospho-1-deoxy-D-ribulos-1-ylimino)methylamino]-1-(5-phospho-beta-D-ribosyl)imidazole-4-carboxamide + L-glutamine = D-erythro-1-(imidazol-4-yl)glycerol 3-phosphate + 5-amino-1-(5-phospho-beta-D-ribosyl)imidazole-4-carboxamide + L-glutamate + H(+). The catalysed reaction is L-glutamine + H2O = L-glutamate + NH4(+). It participates in amino-acid biosynthesis; L-histidine biosynthesis; L-histidine from 5-phospho-alpha-D-ribose 1-diphosphate: step 5/9. In terms of biological role, IGPS catalyzes the conversion of PRFAR and glutamine to IGP, AICAR and glutamate. The HisH subunit catalyzes the hydrolysis of glutamine to glutamate and ammonia as part of the synthesis of IGP and AICAR. The resulting ammonia molecule is channeled to the active site of HisF. This is Imidazole glycerol phosphate synthase subunit HisH from Corynebacterium diphtheriae (strain ATCC 700971 / NCTC 13129 / Biotype gravis).